Here is a 171-residue protein sequence, read N- to C-terminus: uncharacterized protein (171 aa).

In terms of biological role, required for production of the bacteriocin SkfA. This is an uncharacterized protein from Bacillus subtilis (strain 168).